The following is a 298-amino-acid chain: N-acetylmuramic acid 6-phosphate etherase (298 aa).

Residues 55–218 (IHAQVSGGGR…STGLMIKSGK (164 aa)) form the SIS domain. Glu-83 (proton donor) is an active-site residue. The active site involves Glu-114.

It belongs to the GCKR-like family. MurNAc-6-P etherase subfamily. Homodimer.

It catalyses the reaction N-acetyl-D-muramate 6-phosphate + H2O = N-acetyl-D-glucosamine 6-phosphate + (R)-lactate. It functions in the pathway amino-sugar metabolism; 1,6-anhydro-N-acetylmuramate degradation. The protein operates within amino-sugar metabolism; N-acetylmuramate degradation. It participates in cell wall biogenesis; peptidoglycan recycling. Functionally, specifically catalyzes the cleavage of the D-lactyl ether substituent of MurNAc 6-phosphate, producing GlcNAc 6-phosphate and D-lactate. Together with AnmK, is also required for the utilization of anhydro-N-acetylmuramic acid (anhMurNAc) either imported from the medium or derived from its own cell wall murein, and thus plays a role in cell wall recycling. This chain is N-acetylmuramic acid 6-phosphate etherase, found in Escherichia coli O157:H7 (strain EC4115 / EHEC).